We begin with the raw amino-acid sequence, 83 residues long: MSSGGLLLLLGLLTLWEGLTPVSSKDHPRFCELPADPGPCNGLFQAFYYNPVQRTCLKFRYGGCKGNPNTFKTIEECKRTCAA.

The N-terminal stretch at 1–24 (MSSGGLLLLLGLLTLWEGLTPVSS) is a signal peptide. In terms of domain architecture, BPTI/Kunitz inhibitor spans 31–81 (CELPADPGPCNGLFQAFYYNPVQRTCLKFRYGGCKGNPNTFKTIEECKRTC). Cystine bridges form between Cys-31–Cys-81, Cys-40–Cys-64, and Cys-56–Cys-77.

The protein belongs to the venom Kunitz-type family. In terms of tissue distribution, expressed by the venom gland.

Its subcellular location is the secreted. Its function is as follows. Serine protease inhibitor. The chain is Kunitz-type serine protease inhibitor mulgin-4 from Pseudechis australis (Mulga snake).